Reading from the N-terminus, the 642-residue chain is Threonine--tRNA ligase (642 aa).

Residues 1–61 (MPVITLPDGS…ESDAQLAIIT (61 aa)) form the TGS domain. A catalytic region spans residues 243-534 (DHRKIGKQLD…LTEEYAGFFP (292 aa)). C334, H385, and H511 together coordinate Zn(2+).

This sequence belongs to the class-II aminoacyl-tRNA synthetase family. As to quaternary structure, homodimer. Requires Zn(2+) as cofactor.

The protein localises to the cytoplasm. It catalyses the reaction tRNA(Thr) + L-threonine + ATP = L-threonyl-tRNA(Thr) + AMP + diphosphate + H(+). Its function is as follows. Catalyzes the attachment of threonine to tRNA(Thr) in a two-step reaction: L-threonine is first activated by ATP to form Thr-AMP and then transferred to the acceptor end of tRNA(Thr). Also edits incorrectly charged L-seryl-tRNA(Thr). The chain is Threonine--tRNA ligase from Yersinia pseudotuberculosis serotype O:1b (strain IP 31758).